Reading from the N-terminus, the 145-residue chain is Large ribosomal subunit protein uL16 (145 aa).

Over residues 76 to 95 (PKTKTPAETRMGKGKGEPEH) the composition is skewed to basic and acidic residues. Residues 76 to 97 (PKTKTPAETRMGKGKGEPEHFV) form a disordered region.

This sequence belongs to the universal ribosomal protein uL16 family. As to quaternary structure, part of the 50S ribosomal subunit.

Its function is as follows. Binds 23S rRNA and is also seen to make contacts with the A and possibly P site tRNAs. In Salinibacter ruber (strain DSM 13855 / M31), this protein is Large ribosomal subunit protein uL16.